The primary structure comprises 852 residues: Mannosyl-oligosaccharide glucosidase GCS1 (852 aa).

The interval 1 to 31 is disordered; the sequence is MTGASRRSARGRIKSSSLSPGSDEGSAYPPS. Topologically, residues 1–51 are cytoplasmic; it reads MTGASRRSARGRIKSSSLSPGSDEGSAYPPSIRRGKGKELVSIGAFKTNLK. Positions 6–12 match the Endoplasmic reticulum targeting motif; sequence RRSARGR. Over residues 15–26 the composition is skewed to low complexity; it reads SSSLSPGSDEGS. The helical; Signal-anchor for type II membrane protein transmembrane segment at 52–72 threads the bilayer; the sequence is ILVGLIILGIIVIYFVINRLV. Residues 73–852 are Lumenal-facing; the sequence is RHGLLFDESQ…LIMSEDYPIF (780 aa). The interval 91-150 is required for endoplasmic reticulum targeting; that stretch reads PAPKVMDLSMFQGEHKESLYWGTYRPHVYFGVRARTPLSLVAGLMWLGVKDEMYVMRHFC. Residues asparagine 282, asparagine 552, and asparagine 570 are each glycosylated (N-linked (GlcNAc...) asparagine). Positions 574–583 are enriched in polar residues; it reads QELNPKTLSS. The tract at residues 574 to 593 is disordered; that stretch reads QELNPKTLSSGLDDYPRASH. Aspartate 586 serves as the catalytic Proton donor. N-linked (GlcNAc...) asparagine glycosylation is found at asparagine 633, asparagine 662, and asparagine 730. Glutamate 819 (proton acceptor) is an active-site residue.

The protein belongs to the glycosyl hydrolase 63 family. Constitutively expressed in roots, stems, leaves, flowers and siliques.

It localises to the endoplasmic reticulum membrane. It carries out the reaction N(4)-(alpha-D-Glc-(1-&gt;2)-alpha-D-Glc-(1-&gt;3)-alpha-D-Glc-(1-&gt;3)-alpha-D-Man-(1-&gt;2)-alpha-D-Man-(1-&gt;2)-alpha-D-Man-(1-&gt;3)-[alpha-D-Man-(1-&gt;2)-alpha-D-Man-(1-&gt;3)-[alpha-D-Man-(1-&gt;2)-alpha-D-Man-(1-&gt;6)]-alpha-D-Man-(1-&gt;6)]-beta-D-Man-(1-&gt;4)-beta-D-GlcNAc-(1-&gt;4)-beta-D-GlcNAc)-L-asparaginyl-[protein] + H2O = N(4)-(alpha-D-Glc-(1-&gt;3)-alpha-D-Glc-(1-&gt;3)-alpha-D-Man-(1-&gt;2)-alpha-D-Man-(1-&gt;2)-alpha-D-Man-(1-&gt;3)-[alpha-D-Man-(1-&gt;2)-alpha-D-Man-(1-&gt;3)-[alpha-D-Man-(1-&gt;2)-alpha-D-Man-(1-&gt;6)]-alpha-D-Man-(1-&gt;6)]-beta-D-Man-(1-&gt;4)-beta-D-GlcNAc-(1-&gt;4)-beta-D-GlcNAc)-L-asparaginyl-[protein] + beta-D-glucose. Its pathway is glycan metabolism; N-glycan degradation. Cleaves the distal alpha 1,2-linked glucose residue from the Glc(3)Man(9)GlcNAc(2) oligosaccharide precursor. Required for the accumulation of seed storage proteins, the formation of protein bodies, cell differentiation, cellulose biosynthesis and organization (in cell walls), cell shape determination and organization (e.g. epidermal cells), and embryo development. Involved in root development. This is Mannosyl-oligosaccharide glucosidase GCS1 (GCS1) from Arabidopsis thaliana (Mouse-ear cress).